Reading from the N-terminus, the 178-residue chain is Cell wall-binding protein YwsB (178 aa).

A signal peptide spans 1-30 (MNKPTKLFSTLALAAGMTAAAAGGAGTIHA). 2 consecutive SH3b domains span residues 47–111 (IDSY…VKAA) and 116–178 (TKTK…HMTK).

The protein localises to the secreted. Its subcellular location is the cell wall. Increases in stationary phase in a strain lacking the WprA protease. This Bacillus subtilis (strain 168) protein is Cell wall-binding protein YwsB (ywsB).